A 254-amino-acid chain; its full sequence is Gamma-glutamyl-gamma-aminobutyrate hydrolase (254 aa).

The Glutamine amidotransferase type-1 domain maps to 16-250 (RNRLKGHATQ…ITAWQHHIAE (235 aa)). Cys-114 acts as the Nucleophile in catalysis. Active-site residues include His-222 and Glu-224.

Belongs to the peptidase C26 family.

The enzyme catalyses 4-(gamma-L-glutamylamino)butanoate + H2O = 4-aminobutanoate + L-glutamate. Its pathway is amine and polyamine degradation; putrescine degradation; 4-aminobutanoate from putrescine: step 4/4. Involved in the breakdown of putrescine via hydrolysis of the gamma-glutamyl linkage of gamma-glutamyl-gamma-aminobutyrate. The chain is Gamma-glutamyl-gamma-aminobutyrate hydrolase (puuD) from Shigella flexneri.